Reading from the N-terminus, the 650-residue chain is Acetyl-coenzyme A synthetase (650 aa).

Residues 191 to 194, threonine 311, and asparagine 335 contribute to the CoA site; that span reads RGGR. ATP is bound by residues 387-389, 411-416, aspartate 500, and arginine 515; these read GEP and DTWWQT. Serine 523 is a CoA binding site. ATP is bound at residue arginine 526. Mg(2+)-binding residues include valine 537, histidine 539, and valine 542. Position 584 (arginine 584) interacts with CoA. Lysine 609 is subject to N6-acetyllysine.

Belongs to the ATP-dependent AMP-binding enzyme family. Mg(2+) is required as a cofactor. Acetylated. Deacetylation by the SIR2-homolog deacetylase activates the enzyme.

It catalyses the reaction acetate + ATP + CoA = acetyl-CoA + AMP + diphosphate. In terms of biological role, catalyzes the conversion of acetate into acetyl-CoA (AcCoA), an essential intermediate at the junction of anabolic and catabolic pathways. AcsA undergoes a two-step reaction. In the first half reaction, AcsA combines acetate with ATP to form acetyl-adenylate (AcAMP) intermediate. In the second half reaction, it can then transfer the acetyl group from AcAMP to the sulfhydryl group of CoA, forming the product AcCoA. The protein is Acetyl-coenzyme A synthetase of Shewanella sp. (strain ANA-3).